Reading from the N-terminus, the 217-residue chain is Glycosylphosphatidylinositol anchor biosynthesis protein 11 (217 aa).

Asparagine 20 carries an N-linked (GlcNAc...) asparagine glycan. The next 6 membrane-spanning stretches (helical) occupy residues 41–61 (VYVR…LYWF), 66–86 (DFNL…YLIF), 107–127 (FITL…IVLF), 139–159 (WLLA…VFNC), 169–189 (YFIS…LDWD), and 197–217 (VPLI…GGYI).

It belongs to the PIGF family.

It is found in the endoplasmic reticulum membrane. The protein operates within glycolipid biosynthesis; glycosylphosphatidylinositol-anchor biosynthesis. Its function is as follows. Acts in the GPI biosynthetic pathway between GlcNAc-PI synthesis and GPI transfer to protein. The sequence is that of Glycosylphosphatidylinositol anchor biosynthesis protein 11 (GPI11) from Kluyveromyces lactis (strain ATCC 8585 / CBS 2359 / DSM 70799 / NBRC 1267 / NRRL Y-1140 / WM37) (Yeast).